We begin with the raw amino-acid sequence, 144 residues long: MVQGTLEVLLVGAKGLENTDYLCNMDPYAVLKCRSQEQKSSVASGKGSDPEWNETFMFSVTHNATELIIKLMDSDSGTDDDFVGEATISLEAIYTEGSIPPTVYNVVKEEEYRGEIKVGLTFTPEDDRDRGLSEEDIGGWKQSS.

The 103-residue stretch at 1–103 (MVQGTLEVLL…YTEGSIPPTV (103 aa)) folds into the C2 domain. The Ca(2+) site is built by Asp-20, Asp-26, Asp-73, Asp-75, and Asp-81. The interval 123–144 (TPEDDRDRGLSEEDIGGWKQSS) is disordered.

Ca(2+) serves as cofactor.

The protein is Elicitor-responsive protein 3 (ERG3) of Oryza sativa subsp. indica (Rice).